The primary structure comprises 578 residues: Probable actinorhodin transporter (578 aa).

A disordered region spans residues 1 to 33; that stretch reads MSSVEADEPDRATAPPSALLPEDGPGPDGTAAG. 12 helical membrane-spanning segments follow: residues 78-98, 109-129, 135-155, 170-190, 202-222, 232-252, 259-279, 306-326, 341-361, 369-389, 444-464, and 546-566; these read VIQW…VVGG, MFVV…VAAG, AARF…LGLI, AFGP…GFLV, VFLI…LLLP, FDVV…FPLV, WPAW…GFVA, GLAV…LLAL, LTMT…GAVL, ALHG…LTIG, LGFT…LGSQ, and AMVR…ALAF.

Belongs to the major facilitator superfamily. EmrB family.

The protein localises to the cell membrane. Promotes the efflux of actinorhodin. The polypeptide is Probable actinorhodin transporter (actII-2) (Streptomyces coelicolor (strain ATCC BAA-471 / A3(2) / M145)).